Here is a 47-residue protein sequence, read N- to C-terminus: Protein YpaB (47 aa).

This chain is Protein YpaB (ypaB), found in Escherichia coli (strain K12).